A 486-amino-acid chain; its full sequence is ATP-dependent rRNA helicase rrp3 (486 aa).

The tract at residues 1–60 (MSSVKRRKTDKNPSLEGLKSKKTKESKKESHTPSPEPIEDTEDNRVIEETEEAEEDDAPK) is disordered. Residues 60 to 88 (KSFKDLGIVDSLCEACDTLGYKAPTPIQR) carry the Q motif motif. Residues 91–262 (IPLALQGRDL…RASLKDPLRV (172 aa)) enclose the Helicase ATP-binding domain. 104–111 (AETGSGKT) contributes to the ATP binding site. The DEAD box signature appears at 210–213 (DEAD). A Helicase C-terminal domain is found at 286–434 (HKDTYLIYLL…EYPTVKDEVM (149 aa)). Basic and acidic residues-rich tracts occupy residues 447-460 (ARNE…DRGK) and 476-486 (RGRDEMDREEG). The tract at residues 447-486 (ARNEMKNLHEDRGKKGAVLKGRRPANGAKRGRDEMDREEG) is disordered.

Belongs to the DEAD box helicase family. DDX47/RRP3 subfamily. In terms of assembly, interacts with the SSU processome.

It is found in the nucleus. The catalysed reaction is ATP + H2O = ADP + phosphate + H(+). Its function is as follows. ATP-dependent rRNA helicase required for pre-ribosomal RNA processing. Involved in the maturation of the 35S-pre-rRNA and to its cleavage to mature 18S rRNA. The chain is ATP-dependent rRNA helicase rrp3 from Botryotinia fuckeliana (strain B05.10) (Noble rot fungus).